The sequence spans 260 residues: LIM and SH3 domain protein 1 (260 aa).

The residue at position 1 (methionine 1) is an N-acetylmethionine. The 52-residue stretch at cysteine 5 to histidine 56 folds into the LIM zinc-binding domain. N6-acetyllysine is present on lysine 42. Nebulin repeat units follow at residues serine 61 to glycine 95 and glycine 97 to methionine 131. Position 68 is a phosphothreonine (threonine 68). Lysine 75 is modified (N6-methyllysine). Residue serine 99 is modified to Phosphoserine. Threonine 104 carries the phosphothreonine modification. Lysine 112 is subject to N6-succinyllysine. Phosphoserine occurs at positions 118 and 134. Residues histidine 123–lysine 204 form a disordered region. A compositionally biased stretch (basic and acidic residues) spans glutamate 140–glutamine 155. Residues glutamine 171–glutamine 180 show a composition bias toward low complexity. The region spanning glycine 201–isoleucine 260 is the SH3 domain.

As to quaternary structure, interacts with F-actin. Interacts with ANKRD54. Interacts with KBTBD10. Post-translationally, phosphorylated.

Its subcellular location is the cytoplasm. It localises to the cell cortex. The protein resides in the cytoskeleton. In terms of biological role, plays an important role in the regulation of dynamic actin-based, cytoskeletal activities. Agonist-dependent changes in LASP1 phosphorylation may also serve to regulate actin-associated ion transport activities, not only in the parietal cell but also in certain other F-actin-rich secretory epithelial cell types. The polypeptide is LIM and SH3 domain protein 1 (LASP1) (Bos taurus (Bovine)).